We begin with the raw amino-acid sequence, 162 residues long: Phosphopantetheine adenylyltransferase (162 aa).

Ser-9 contacts substrate. ATP-binding positions include 9-10 (SF) and His-17. The substrate site is built by Lys-41, Val-77, and Lys-91. Residues 92 to 94 (GLR), Glu-102, and 126 to 132 (YAFLSSS) contribute to the ATP site.

This sequence belongs to the bacterial CoaD family. Homohexamer. Requires Mg(2+) as cofactor.

Its subcellular location is the cytoplasm. The catalysed reaction is (R)-4'-phosphopantetheine + ATP + H(+) = 3'-dephospho-CoA + diphosphate. It functions in the pathway cofactor biosynthesis; coenzyme A biosynthesis; CoA from (R)-pantothenate: step 4/5. Reversibly transfers an adenylyl group from ATP to 4'-phosphopantetheine, yielding dephospho-CoA (dPCoA) and pyrophosphate. In Frankia alni (strain DSM 45986 / CECT 9034 / ACN14a), this protein is Phosphopantetheine adenylyltransferase.